Reading from the N-terminus, the 281-residue chain is NADPH-dependent 7-cyano-7-deazaguanine reductase (281 aa).

88 to 90 (IES) is a binding site for substrate. NADPH is bound at residue 90–91 (SK). C189 serves as the catalytic Thioimide intermediate. D196 acts as the Proton donor in catalysis. A substrate-binding site is contributed by 228–229 (HE). 257–258 (RG) contributes to the NADPH binding site.

This sequence belongs to the GTP cyclohydrolase I family. QueF type 2 subfamily. Homodimer.

Its subcellular location is the cytoplasm. It catalyses the reaction 7-aminomethyl-7-carbaguanine + 2 NADP(+) = 7-cyano-7-deazaguanine + 2 NADPH + 3 H(+). It participates in tRNA modification; tRNA-queuosine biosynthesis. Its function is as follows. Catalyzes the NADPH-dependent reduction of 7-cyano-7-deazaguanine (preQ0) to 7-aminomethyl-7-deazaguanine (preQ1). This is NADPH-dependent 7-cyano-7-deazaguanine reductase from Erwinia tasmaniensis (strain DSM 17950 / CFBP 7177 / CIP 109463 / NCPPB 4357 / Et1/99).